A 99-amino-acid chain; its full sequence is uncharacterized protein (99 aa).

The chain crosses the membrane as a helical span at residues Leu6–Ile26. A LysM domain is found at Lys48–Phe95.

Its subcellular location is the secreted. It localises to the cell wall. The protein resides in the membrane. This is an uncharacterized protein from Bacillus subtilis (strain 168).